The primary structure comprises 142 residues: Large ribosomal subunit protein uL11 (142 aa).

This sequence belongs to the universal ribosomal protein uL11 family. As to quaternary structure, part of the ribosomal stalk of the 50S ribosomal subunit. Interacts with L10 and the large rRNA to form the base of the stalk. L10 forms an elongated spine to which L12 dimers bind in a sequential fashion forming a multimeric L10(L12)X complex. One or more lysine residues are methylated.

Forms part of the ribosomal stalk which helps the ribosome interact with GTP-bound translation factors. This is Large ribosomal subunit protein uL11 from Rhodopseudomonas palustris (strain BisB18).